Consider the following 376-residue polypeptide: Glucose-1-phosphate adenylyltransferase (376 aa).

Residues tyrosine 101, glycine 166, 181-182 (EK), and serine 192 each bind alpha-D-glucose 1-phosphate.

This sequence belongs to the bacterial/plant glucose-1-phosphate adenylyltransferase family. Homotetramer.

It catalyses the reaction alpha-D-glucose 1-phosphate + ATP + H(+) = ADP-alpha-D-glucose + diphosphate. The protein operates within glycan biosynthesis; glycogen biosynthesis. Its function is as follows. Involved in the biosynthesis of ADP-glucose, a building block required for the elongation reactions to produce glycogen. Catalyzes the reaction between ATP and alpha-D-glucose 1-phosphate (G1P) to produce pyrophosphate and ADP-Glc. The protein is Glucose-1-phosphate adenylyltransferase of Bacillus cereus (strain ATCC 10987 / NRS 248).